Consider the following 263-residue polypeptide: NH(3)-dependent NAD(+) synthetase (263 aa).

29–36 contributes to the ATP binding site; it reads GISGGIDS. Position 35 (D35) interacts with Mg(2+). A deamido-NAD(+)-binding site is contributed by R114. T134 is an ATP binding site. E139 is a binding site for Mg(2+). Residues K147 and D154 each contribute to the deamido-NAD(+) site. ATP contacts are provided by K163 and S185. 244 to 245 lines the deamido-NAD(+) pocket; sequence HK.

This sequence belongs to the NAD synthetase family. As to quaternary structure, homodimer.

It carries out the reaction deamido-NAD(+) + NH4(+) + ATP = AMP + diphosphate + NAD(+) + H(+). The protein operates within cofactor biosynthesis; NAD(+) biosynthesis; NAD(+) from deamido-NAD(+) (ammonia route): step 1/1. Its function is as follows. Catalyzes the ATP-dependent amidation of deamido-NAD to form NAD. Uses ammonia as a nitrogen source. In Methanococcoides burtonii (strain DSM 6242 / NBRC 107633 / OCM 468 / ACE-M), this protein is NH(3)-dependent NAD(+) synthetase.